Reading from the N-terminus, the 315-residue chain is tRNA dimethylallyltransferase (315 aa).

Position 10–17 (10–17 (GPTASGKS)) interacts with ATP. Position 12–17 (12–17 (TASGKS)) interacts with substrate. The tract at residues 35-38 (DSMQ) is interaction with substrate tRNA.

It belongs to the IPP transferase family. As to quaternary structure, monomer. Requires Mg(2+) as cofactor.

The catalysed reaction is adenosine(37) in tRNA + dimethylallyl diphosphate = N(6)-dimethylallyladenosine(37) in tRNA + diphosphate. Catalyzes the transfer of a dimethylallyl group onto the adenine at position 37 in tRNAs that read codons beginning with uridine, leading to the formation of N6-(dimethylallyl)adenosine (i(6)A). The protein is tRNA dimethylallyltransferase of Thermoanaerobacter pseudethanolicus (strain ATCC 33223 / 39E) (Clostridium thermohydrosulfuricum).